A 205-amino-acid polypeptide reads, in one-letter code: StAR-related lipid transfer protein 4 (205 aa).

The START domain occupies 1–205 (MEGLSDVASF…NFYGDLRKAL (205 aa)).

It carries out the reaction cholesterol(in) = cholesterol(out). In terms of biological role, involved in the intracellular transport of cholesterol. Binds cholesterol or other sterols. The polypeptide is StAR-related lipid transfer protein 4 (STARD4) (Homo sapiens (Human)).